A 515-amino-acid chain; its full sequence is Protein FAM98A (515 aa).

2 disordered regions span residues 297 to 410 and 432 to 515; these read VLMG…GYHG and SGYQ…HYTS. Basic and acidic residues predominate over residues 302–311; the sequence is VPDRGGRPNE. Positions 382 to 394 are enriched in gly residues; it reads WTDGGSGSGGGYQ. Basic and acidic residues predominate over residues 444 to 456; it reads RYQDGGHHGERGS. A compositionally biased stretch (gly residues) spans 457–481; it reads GRGGRGGRGGRGGRGSQGGGWGGRG. A compositionally biased stretch (low complexity) spans 485 to 501; it reads YHQGGQFEQHFQHGGYQ. A compositionally biased stretch (polar residues) spans 502–515; sequence YSHSGFGQGRHYTS.

Belongs to the FAM98 family. Interacts (via N- and C-terminus) with DDX1. Interacts (via N- and C-terminus) with C14orf166. Interacts with FAM98B. Interacts with PLEKHM1 (via N- and C-terminus).

Positively stimulates PRMT1-induced protein arginine methylation. Involved in skeletal homeostasis. Positively regulates lysosome peripheral distribution and ruffled border formation in osteoclasts. This is Protein FAM98A from Mus musculus (Mouse).